We begin with the raw amino-acid sequence, 458 residues long: UDP-N-acetylmuramate--L-alanine ligase (458 aa).

115–121 (GSHGKTT) provides a ligand contact to ATP.

It belongs to the MurCDEF family.

It localises to the cytoplasm. The enzyme catalyses UDP-N-acetyl-alpha-D-muramate + L-alanine + ATP = UDP-N-acetyl-alpha-D-muramoyl-L-alanine + ADP + phosphate + H(+). The protein operates within cell wall biogenesis; peptidoglycan biosynthesis. In terms of biological role, cell wall formation. The protein is UDP-N-acetylmuramate--L-alanine ligase of Anaeromyxobacter dehalogenans (strain 2CP-1 / ATCC BAA-258).